A 189-amino-acid chain; its full sequence is ATP-dependent protease subunit HslV (189 aa).

The active site involves Thr12. Na(+) contacts are provided by Ala172, Cys175, and Thr178.

It belongs to the peptidase T1B family. HslV subfamily. As to quaternary structure, a double ring-shaped homohexamer of HslV is capped on each side by a ring-shaped HslU homohexamer. The assembly of the HslU/HslV complex is dependent on binding of ATP.

It is found in the cytoplasm. It carries out the reaction ATP-dependent cleavage of peptide bonds with broad specificity.. With respect to regulation, allosterically activated by HslU binding. Protease subunit of a proteasome-like degradation complex believed to be a general protein degrading machinery. The protein is ATP-dependent protease subunit HslV of Ehrlichia ruminantium (strain Welgevonden).